We begin with the raw amino-acid sequence, 119 residues long: Large ribosomal subunit protein uL22c (119 aa).

The protein belongs to the universal ribosomal protein uL22 family. Part of the 50S ribosomal subunit.

It is found in the plastid. Its subcellular location is the chloroplast. In terms of biological role, this protein binds specifically to 23S rRNA. Functionally, the globular domain of the protein is located near the polypeptide exit tunnel on the outside of the subunit, while an extended beta-hairpin is found that lines the wall of the exit tunnel in the center of the 70S ribosome. The sequence is that of Large ribosomal subunit protein uL22c (rpl22) from Chaetosphaeridium globosum (Charophycean green alga).